The sequence spans 139 residues: MIQRTRNQSIMLSLPSNQSANHAILTFQPIGQSRYLLTFQPTPSIPLLQQYIISVPYLDAYSSICFPVMARIRSAKYCFFFFLVLFLNGIIATRGKAMLPTLPQKGAAFFPPKMPVPPSGPSKQHNSAPRSDFVQFFYM.

A helical membrane pass occupies residues 77–97; it reads YCFFFFLVLFLNGIIATRGKA.

Its subcellular location is the mitochondrion membrane. This is an uncharacterized protein from Arabidopsis thaliana (Mouse-ear cress).